The primary structure comprises 381 residues: Erythronate-4-phosphate dehydrogenase (381 aa).

Positions 45 and 67 each coordinate substrate. NAD(+)-binding positions include 127-128, D147, and T176; that span reads QV. R209 is a catalytic residue. D233 lines the NAD(+) pocket. The active site involves E238. The Proton donor role is filled by H255. G258 is an NAD(+) binding site. A substrate-binding site is contributed by Y259.

Belongs to the D-isomer specific 2-hydroxyacid dehydrogenase family. PdxB subfamily. Homodimer.

It localises to the cytoplasm. The enzyme catalyses 4-phospho-D-erythronate + NAD(+) = (R)-3-hydroxy-2-oxo-4-phosphooxybutanoate + NADH + H(+). It participates in cofactor biosynthesis; pyridoxine 5'-phosphate biosynthesis; pyridoxine 5'-phosphate from D-erythrose 4-phosphate: step 2/5. Functionally, catalyzes the oxidation of erythronate-4-phosphate to 3-hydroxy-2-oxo-4-phosphonooxybutanoate. This Vibrio cholerae serotype O1 (strain ATCC 39315 / El Tor Inaba N16961) protein is Erythronate-4-phosphate dehydrogenase.